We begin with the raw amino-acid sequence, 279 residues long: Putative pyruvate, phosphate dikinase regulatory protein (279 aa).

ADP is bound at residue 152 to 159; it reads GVSRTSKS.

It belongs to the pyruvate, phosphate/water dikinase regulatory protein family. PDRP subfamily.

It catalyses the reaction N(tele)-phospho-L-histidyl/L-threonyl-[pyruvate, phosphate dikinase] + ADP = N(tele)-phospho-L-histidyl/O-phospho-L-threonyl-[pyruvate, phosphate dikinase] + AMP + H(+). The catalysed reaction is N(tele)-phospho-L-histidyl/O-phospho-L-threonyl-[pyruvate, phosphate dikinase] + phosphate + H(+) = N(tele)-phospho-L-histidyl/L-threonyl-[pyruvate, phosphate dikinase] + diphosphate. Bifunctional serine/threonine kinase and phosphorylase involved in the regulation of the pyruvate, phosphate dikinase (PPDK) by catalyzing its phosphorylation/dephosphorylation. The polypeptide is Putative pyruvate, phosphate dikinase regulatory protein (Anaplasma marginale (strain St. Maries)).